The following is a 549-amino-acid chain: Cytoplasmic trehalase (549 aa).

Residues arginine 168, 175–176, asparagine 212, 221–223, 292–294, and glycine 324 each bind substrate; these read WD, RSQ, and RDE. Catalysis depends on proton donor/acceptor residues aspartate 326 and glutamate 509. Position 525 (glutamate 525) interacts with substrate.

It belongs to the glycosyl hydrolase 37 family. In terms of assembly, monomer.

The protein resides in the cytoplasm. The catalysed reaction is alpha,alpha-trehalose + H2O = alpha-D-glucose + beta-D-glucose. The protein operates within glycan degradation; trehalose degradation; D-glucose from alpha,alpha-trehalose: step 1/1. Its function is as follows. Hydrolyzes trehalose to glucose. Could be involved, in cells returning to low osmolarity conditions, in the utilization of the accumulated cytoplasmic trehalose, which was synthesized in response to high osmolarity. This is Cytoplasmic trehalase from Salmonella typhi.